The chain runs to 206 residues: Octanoyltransferase (206 aa).

The BPL/LPL catalytic domain occupies 30-206; sequence PETNDEIWLV…EFVTLLNNSI (177 aa). Substrate-binding positions include 69-76, 137-139, and 150-152; these read RGGQVTYH, SLG, and GIA. The active-site Acyl-thioester intermediate is Cys168.

This sequence belongs to the LipB family.

It localises to the cytoplasm. The enzyme catalyses octanoyl-[ACP] + L-lysyl-[protein] = N(6)-octanoyl-L-lysyl-[protein] + holo-[ACP] + H(+). Its pathway is protein modification; protein lipoylation via endogenous pathway; protein N(6)-(lipoyl)lysine from octanoyl-[acyl-carrier-protein]: step 1/2. Its function is as follows. Catalyzes the transfer of endogenously produced octanoic acid from octanoyl-acyl-carrier-protein onto the lipoyl domains of lipoate-dependent enzymes. Lipoyl-ACP can also act as a substrate although octanoyl-ACP is likely to be the physiological substrate. In Francisella tularensis subsp. novicida (strain U112), this protein is Octanoyltransferase.